Consider the following 167-residue polypeptide: Regulatory protein RecX (167 aa).

A disordered region spans residues 19 to 49 (ESELRRKLASQPFSAKGHWGKQTGRSDNEPV).

It belongs to the RecX family.

The protein localises to the cytoplasm. Modulates RecA activity. This Yersinia enterocolitica serotype O:8 / biotype 1B (strain NCTC 13174 / 8081) protein is Regulatory protein RecX.